The following is a 413-amino-acid chain: Putative competence-damage inducible protein (413 aa).

This sequence belongs to the CinA family.

The sequence is that of Putative competence-damage inducible protein from Thermoanaerobacter pseudethanolicus (strain ATCC 33223 / 39E) (Clostridium thermohydrosulfuricum).